The following is a 136-amino-acid chain: Large ribosomal subunit protein uL16 (136 aa).

Belongs to the universal ribosomal protein uL16 family. Part of the 50S ribosomal subunit.

Its function is as follows. Binds 23S rRNA and is also seen to make contacts with the A and possibly P site tRNAs. This chain is Large ribosomal subunit protein uL16, found in Sodalis glossinidius (strain morsitans).